Here is a 399-residue protein sequence, read N- to C-terminus: 4-hydroxy-3-methylbut-2-enyl diphosphate reductase (399 aa).

Residue Cys66 participates in [4Fe-4S] cluster binding. His96 is a (2E)-4-hydroxy-3-methylbut-2-enyl diphosphate binding site. His96 serves as a coordination point for dimethylallyl diphosphate. His96 is an isopentenyl diphosphate binding site. Cys157 provides a ligand contact to [4Fe-4S] cluster. Residue His185 participates in (2E)-4-hydroxy-3-methylbut-2-enyl diphosphate binding. Dimethylallyl diphosphate is bound at residue His185. Position 185 (His185) interacts with isopentenyl diphosphate. The active-site Proton donor is Glu187. (2E)-4-hydroxy-3-methylbut-2-enyl diphosphate is bound at residue Thr250. [4Fe-4S] cluster is bound at residue Cys288. Residues Ser317, Ser318, Asn319, and Ser380 each coordinate (2E)-4-hydroxy-3-methylbut-2-enyl diphosphate. 4 residues coordinate dimethylallyl diphosphate: Ser317, Ser318, Asn319, and Ser380. Isopentenyl diphosphate contacts are provided by Ser317, Ser318, Asn319, and Ser380.

The protein belongs to the IspH family. It depends on [4Fe-4S] cluster as a cofactor.

It catalyses the reaction isopentenyl diphosphate + 2 oxidized [2Fe-2S]-[ferredoxin] + H2O = (2E)-4-hydroxy-3-methylbut-2-enyl diphosphate + 2 reduced [2Fe-2S]-[ferredoxin] + 2 H(+). The catalysed reaction is dimethylallyl diphosphate + 2 oxidized [2Fe-2S]-[ferredoxin] + H2O = (2E)-4-hydroxy-3-methylbut-2-enyl diphosphate + 2 reduced [2Fe-2S]-[ferredoxin] + 2 H(+). The protein operates within isoprenoid biosynthesis; dimethylallyl diphosphate biosynthesis; dimethylallyl diphosphate from (2E)-4-hydroxy-3-methylbutenyl diphosphate: step 1/1. It participates in isoprenoid biosynthesis; isopentenyl diphosphate biosynthesis via DXP pathway; isopentenyl diphosphate from 1-deoxy-D-xylulose 5-phosphate: step 6/6. Functionally, catalyzes the conversion of 1-hydroxy-2-methyl-2-(E)-butenyl 4-diphosphate (HMBPP) into a mixture of isopentenyl diphosphate (IPP) and dimethylallyl diphosphate (DMAPP). Acts in the terminal step of the DOXP/MEP pathway for isoprenoid precursor biosynthesis. The polypeptide is 4-hydroxy-3-methylbut-2-enyl diphosphate reductase (Synechococcus sp. (strain CC9902)).